Reading from the N-terminus, the 178-residue chain is MATVDPIRYPIGTFQAPQQFEAGEVQEWIAAIRGLPSDLRTAVSGLNDEQLNTPYREGGWTVAQVVHHLADASMNAFLRTKWGVTEDGPTVKPFAESEWAKTADACLLPIEPSLLLLDGLHARWAALLESMTEADFHRTVRPEGAAGEMPLYVLTALYAWHGKHHTAQVASLRKRKGW.

The Zn(2+) site is built by His68, His161, and His165.

This sequence belongs to the metal hydrolase YfiT family. In terms of assembly, homodimer. Requires Zn(2+) as cofactor.

The protein resides in the cytoplasm. Its function is as follows. Possible metal-dependent hydrolase. The sequence is that of Putative metal-dependent hydrolase GK0616 from Geobacillus kaustophilus (strain HTA426).